We begin with the raw amino-acid sequence, 251 residues long: 14-3-3-like protein (251 aa).

It belongs to the 14-3-3 family.

This chain is 14-3-3-like protein, found in Fucus vesiculosus (Bladder wrack).